Reading from the N-terminus, the 1369-residue chain is MutS protein homolog 5 (1369 aa).

A disordered region spans residues 138–190 (IYEDGTTEEGTSEDTVPTWDSSLAYSTDETTAEKEEKEEDEDDDDEGLPAKLN). A compositionally biased stretch (acidic residues) spans 173 to 184 (EKEEDEDDDDEG). Position 639-646 (639-646 (GPNACGKS)) interacts with ATP. 4 disordered regions span residues 880 to 915 (SMRNVSEEIEKERSEASTPASKSRSTITARSNSVLS), 935 to 1135 (KKKK…RSSN), 1153 to 1182 (LKSQDTYDPNVTPRSSSRRELRPDVSHSQN), and 1248 to 1278 (NFIFKTPEPRSSEKQRSLLKNKGQASNSSIS). Residues 884-894 (VSEEIEKERSE) are compositionally biased toward basic and acidic residues. Polar residues-rich tracts occupy residues 895–915 (ASTPASKSRSTITARSNSVLS) and 941–950 (TGSSMESSMS). Positions 954 to 967 (FQEEDEGTEGEEDQ) are enriched in acidic residues. Polar residues predominate over residues 991–1003 (QSINSRHSFSTRT). Residues 1024-1037 (STSTSSPGPSASKS) are compositionally biased toward low complexity. The segment covering 1049–1065 (VKESQVLETPKQLSISS) has biased composition (polar residues). Residues 1073–1084 (SSEKDVISRVSE) are compositionally biased toward basic and acidic residues. Polar residues-rich tracts occupy residues 1111–1124 (KNRSMNQSLIQSAR) and 1153–1167 (LKSQDTYDPNVTPRS). The span at 1254 to 1263 (PEPRSSEKQR) shows a compositional bias: basic and acidic residues.

It belongs to the DNA mismatch repair MutS family. Heterooligomer of him-14 and msh-5. Interacts with the brc-1-brd-1 heterodimer. In terms of tissue distribution, expressed in the germline.

Its subcellular location is the chromosome. Its function is as follows. Crucial component in meiotic recombination, functioning at some point after the initiation step of recombination. Plays a role in promoting the crossover outcome of meiotic recombination events. Required for formation of normal meiotic crossover, and crossover and chiasmata generated by artificially made DNA breaks. Together with him-14 and zhp-3 plays a role in the activation of DNA damage-dependent apoptosis at the DNA damage checkpoint in pachytene cells. This Caenorhabditis elegans protein is MutS protein homolog 5.